The following is a 273-amino-acid chain: Dermonecrotic toxin LapSicTox-alphaIB1aii (273 aa).

H5 is a catalytic residue. Positions 25 and 27 each coordinate Mg(2+). H41 functions as the Nucleophile in the catalytic mechanism. Disulfide bonds link C45–C51 and C47–C190. D85 is a binding site for Mg(2+). An N-linked (GlcNAc...) asparagine glycan is attached at N250.

This sequence belongs to the arthropod phospholipase D family. Class II subfamily. It depends on Mg(2+) as a cofactor. As to expression, expressed by the venom gland.

It is found in the secreted. It carries out the reaction an N-(acyl)-sphingosylphosphocholine = an N-(acyl)-sphingosyl-1,3-cyclic phosphate + choline. The enzyme catalyses an N-(acyl)-sphingosylphosphoethanolamine = an N-(acyl)-sphingosyl-1,3-cyclic phosphate + ethanolamine. The catalysed reaction is a 1-acyl-sn-glycero-3-phosphocholine = a 1-acyl-sn-glycero-2,3-cyclic phosphate + choline. It catalyses the reaction a 1-acyl-sn-glycero-3-phosphoethanolamine = a 1-acyl-sn-glycero-2,3-cyclic phosphate + ethanolamine. Functionally, dermonecrotic toxins cleave the phosphodiester linkage between the phosphate and headgroup of certain phospholipids (sphingolipid and lysolipid substrates), forming an alcohol (often choline) and a cyclic phosphate. This toxin acts on sphingomyelin (SM). It may also act on ceramide phosphoethanolamine (CPE), lysophosphatidylcholine (LPC) and lysophosphatidylethanolamine (LPE), but not on lysophosphatidylserine (LPS), and lysophosphatidylglycerol (LPG). It acts by transphosphatidylation, releasing exclusively cyclic phosphate products as second products. Induces dermonecrosis, hemolysis, increased vascular permeability, edema, inflammatory response, and platelet aggregation. The chain is Dermonecrotic toxin LapSicTox-alphaIB1aii from Loxosceles apachea (Apache recluse spider).